The following is a 204-amino-acid chain: High frequency lysogenization protein HflD homolog (204 aa).

It belongs to the HflD family.

The protein resides in the cytoplasm. It localises to the cell inner membrane. This is High frequency lysogenization protein HflD homolog from Xylella fastidiosa (strain M23).